Consider the following 338-residue polypeptide: MAKAKIAVNGYGTIGKRVADAVRAQDDMEVVGISKTKPNYEAAVAHRLGYDIYAPAANLEAFEKAGMPAAGSIEEMLEKADLVVDCTPGGIGEKNKPIYEKVGIKAIWQGGESHPIAGFSFNAESNYEQAVGRDLTRVVSCNTTALCRAISTIDRELGVNKVRASLSRRAVDPNEIKKGPVDAIVLNPVKLPSHHGPDVRSVLPHINITTAAIKVPTTLMHVHTVNMEVNKDCTAEDVKNIFGSQSRIRLVGQGITSTAEIIEFARDIGRPRHDMWELCIWPESITVTDKELYFFHAVHQESIVVPENVDAIRAMMELESDGAKSIEKTNKAIGLYNK.

Residues 13–14 and glycine 111 contribute to the NAD(+) site; that span reads TI. 140 to 142 is a binding site for D-glyceraldehyde 3-phosphate; the sequence is SCN. The Nucleophile role is filled by cysteine 141. Arginine 169 contacts NAD(+). 195-196 contributes to the D-glyceraldehyde 3-phosphate binding site; it reads HG. Residue glutamine 300 coordinates NAD(+).

The protein belongs to the glyceraldehyde-3-phosphate dehydrogenase family. As to quaternary structure, homotetramer.

The protein resides in the cytoplasm. It carries out the reaction D-glyceraldehyde 3-phosphate + phosphate + NADP(+) = (2R)-3-phospho-glyceroyl phosphate + NADPH + H(+). The catalysed reaction is D-glyceraldehyde 3-phosphate + phosphate + NAD(+) = (2R)-3-phospho-glyceroyl phosphate + NADH + H(+). It functions in the pathway carbohydrate degradation; glycolysis; pyruvate from D-glyceraldehyde 3-phosphate: step 1/5. In Methanosarcina barkeri (strain Fusaro / DSM 804), this protein is Glyceraldehyde-3-phosphate dehydrogenase 2.